The sequence spans 178 residues: Large ribosomal subunit protein uL6 (178 aa).

The protein belongs to the universal ribosomal protein uL6 family. As to quaternary structure, part of the 50S ribosomal subunit.

This protein binds to the 23S rRNA, and is important in its secondary structure. It is located near the subunit interface in the base of the L7/L12 stalk, and near the tRNA binding site of the peptidyltransferase center. This Streptococcus uberis (strain ATCC BAA-854 / 0140J) protein is Large ribosomal subunit protein uL6.